The following is a 286-amino-acid chain: tRNA pseudouridine synthase A (286 aa).

Aspartate 60 functions as the Nucleophile in the catalytic mechanism. Tyrosine 132 contributes to the substrate binding site.

The protein belongs to the tRNA pseudouridine synthase TruA family. In terms of assembly, homodimer.

It catalyses the reaction uridine(38/39/40) in tRNA = pseudouridine(38/39/40) in tRNA. Its function is as follows. Formation of pseudouridine at positions 38, 39 and 40 in the anticodon stem and loop of transfer RNAs. The protein is tRNA pseudouridine synthase A of Mycobacterium leprae (strain TN).